Consider the following 25-residue polypeptide: Large ribosomal subunit protein uL30 (25 aa).

The protein belongs to the universal ribosomal protein uL30 family. In terms of assembly, part of the 50S ribosomal subunit.

The chain is Large ribosomal subunit protein uL30 (rpmD) from Pseudomonas putida (Arthrobacter siderocapsulatus).